The chain runs to 211 residues: Endonuclease Htp3 (211 aa).

A signal peptide spans Met-1–Gly-20. The RxLR signature appears at Arg-48–Arg-51. One can recognise a TNase-like domain in the interval Arg-48–Leu-198. Asp-77 lines the Ca(2+) pocket. The active site involves Arg-90. Position 95 (Asp-95) interacts with Ca(2+). Residues Glu-98 and Arg-138 contribute to the active site. Residue Asn-153 is glycosylated (N-linked (GlcNAc...) asparagine). The tract at residues Lys-200–Lys-211 is binding to the host cell surface.

It in the N-terminal section; belongs to the RxLR effector family. In the C-terminal section; belongs to the LCL3 family. In terms of assembly, interacts with the host cell surface endoplasmin gp96, in order to get translocated into to host cell. Interacts with the effector Htp1, in order to get released from vesicles into the host cytosol.

It localises to the secreted. It is found in the host cytoplasm. The protein localises to the host cytosol. With respect to regulation, the nuclease activity shows a general salt dependency with a clear reduction by magnesium and sulfate ions. Functionally, effector involved in the disease saprolegniosis in salmonids and other freshwater fish, resulting in considerable economic losses in aquaculture. Within the host fish cells, Htp3 is released from vesicles into host cytosol where it degrades nucleic acids. This Saprolegnia parasitica (strain CBS 223.65) protein is Endonuclease Htp3 (HTP3).